A 58-amino-acid chain; its full sequence is Glutathione reductase (58 aa).

Residues Glu-5, Thr-12, Cys-13, and Lys-21 each coordinate FAD. A disulfide bond links Cys-13 and Cys-18.

It belongs to the class-I pyridine nucleotide-disulfide oxidoreductase family. Homodimer. The cofactor is FAD.

The protein localises to the cytoplasm. It carries out the reaction 2 glutathione + NADP(+) = glutathione disulfide + NADPH + H(+). Catalyzes the reduction of glutathione disulfide (GSSG) to reduced glutathione (GSH). Constitutes the major mechanism to maintain a high GSH:GSSG ratio in the cytosol. The polypeptide is Glutathione reductase (Spirulina sp).